Here is a 182-residue protein sequence, read N- to C-terminus: MSFDKQNLIWIDLEMTGLDPEKERIIEIATIVTDKNLNILAEGPVLAVHQSDELLNKMNDWCQKTHSENGLIERVKASKLTERAAELQTLDFLKKWVPKGASPICGNSIAQDKRFLVKYMPDLADYFHYRHLDVSTLKELAARWKPEILEGFKKENTHLALDDIRESIKELAYYREHFMKLD.

The Exonuclease domain occupies 8 to 171; the sequence is LIWIDLEMTG…DDIRESIKEL (164 aa). Tyr-129 is a catalytic residue.

Belongs to the oligoribonuclease family.

It localises to the cytoplasm. In terms of biological role, 3'-to-5' exoribonuclease specific for small oligoribonucleotides. The polypeptide is Oligoribonuclease (Haemophilus influenzae (strain PittGG)).